Consider the following 1045-residue polypeptide: Desmoglein-1 (1045 aa).

A signal peptide spans 1-23; it reads MNWPFFRTAAVLFIFLVVLEVNS. The propeptide occupies 24 to 49; the sequence is EFRIQVRDYNTKNGTIKWHSIRRQKR. Asn-36, Asn-110, and Asn-180 each carry an N-linked (GlcNAc...) asparagine glycan. 4 consecutive Cadherin domains span residues 50–158, 159–270, 271–385, and 386–496; these read EWIK…PVFS, MSTF…PYME, LPSN…GSVF, and RPGS…TDGA. Residues 50 to 546 lie on the Extracellular side of the membrane; sequence EWIKFAAACR…HPLDNVHFGP (497 aa). Residues 547–567 form a helical membrane-spanning segment; sequence AGIGLLIMGFLVLGLVPFLLM. The Cytoplasmic portion of the chain corresponds to 568-1045; it reads YCDCGGAPGG…TKYSTVQYTK (478 aa). 5 Desmoglein repeat repeats span residues 814–840, 841–870, 871–900, 901–928, and 929–957; these read TYPS…TMTE, SYTT…ERVV, GPIS…ERVI, APNS…ERVI, and RPTS…ERVV. Positions 1019 to 1045 are disordered; the sequence is FSNTLGSASPTTTRSRITKYSTVQYTK. Over residues 1020-1045 the composition is skewed to polar residues; the sequence is SNTLGSASPTTTRSRITKYSTVQYTK.

Binds to JUP/plakoglobin. Interacts with PKP2. Interacts with DSC3; there is evidence to suggest that the interaction promotes cell-cell adhesion of keratinocytes.

Its subcellular location is the cell membrane. The protein localises to the cell junction. It localises to the desmosome. The protein resides in the cytoplasm. It is found in the nucleus. In terms of biological role, component of intercellular desmosome junctions. Involved in the interaction of plaque proteins and intermediate filaments mediating cell-cell adhesion. This is Desmoglein-1 (DSG1) from Sus scrofa (Pig).